Reading from the N-terminus, the 199-residue chain is Recombination protein RecR (199 aa).

The C4-type zinc finger occupies 56–71 (CTVCFNVTEQETCNIC). The region spanning 79 to 174 (SVICVVEESK…TVTRLASGLP (96 aa)) is the Toprim domain.

It belongs to the RecR family.

May play a role in DNA repair. It seems to be involved in an RecBC-independent recombinational process of DNA repair. It may act with RecF and RecO. In Paenarthrobacter aurescens (strain TC1), this protein is Recombination protein RecR.